A 1294-amino-acid chain; its full sequence is Ethylene-insensitive protein 2 (1294 aa).

Residues 1–12 (MEAEIVNVRPQL) are Cytoplasmic-facing. A helical membrane pass occupies residues 13 to 33 (GFIQRMVPALLPVLLVSVGYI). The Extracellular portion of the chain corresponds to 34–50 (DPGKWVANIEGGARFGY). Residues 51 to 71 (DLVAITLLFNFAAILCQYVAA) traverse the membrane as a helical segment. Over 72–105 (RISVVTGKHLAQICNEEYDKWTCMFLGIQAEFSA) the chain is Cytoplasmic. Residues 106-126 (ILLDLTMVVGVAHALNLLFGV) traverse the membrane as a helical segment. Position 127 (E127) is a topological domain, extracellular. A helical transmembrane segment spans residues 128–148 (LSTGVFLAAMDAFLFPVFASF). At 149–155 (LENGMAN) the chain is on the cytoplasmic side. A helical transmembrane segment spans residues 156–176 (TVSIYSAGLVLLLYVSGVLLS). Over 177–194 (QSEIPLSMNGVLTRLNGE) the chain is Extracellular. The chain crosses the membrane as a helical span at residues 195–215 (SAFALMGLLGASIVPHNFYIH). Residues 216–237 (SYFAGESTSSSDVDKSSLCQDH) are Cytoplasmic-facing. The helical transmembrane segment at 238-258 (LFAIFGVFSGLSLVNYVLMNA) threads the bilayer. Over 259-287 (AANVFHSTGLVVLTFHDALSLMEQVFMSP) the chain is Extracellular. A helical transmembrane segment spans residues 288-308 (LIPVVFLMLLFFSSQITALAW). Residues 309-334 (AFGGEVVLHDFLKIEIPAWLHRATIR) are Cytoplasmic-facing. 2 helical membrane-spanning segments follow: residues 335 to 355 (ILAV…GIYQ) and 356 to 376 (LLIF…IPLF). At 377–397 (RIASSRQIMGVHKIPQVGEFL) the chain is on the cytoplasmic side. The helical transmembrane segment at 398-418 (ALTTFLGFLGLNVVFVVEMVF) threads the bilayer. At 419 to 440 (GSSDWAGGLRWNTVMGTSIQYT) the chain is on the extracellular side. A helical transmembrane segment spans residues 441–461 (TLLVSSCASLCLILWLAATPL). Topologically, residues 462 to 1294 (KSASNRAEAQ…KNVTAYGSLG (833 aa)) are cytoplasmic. 2 disordered regions span residues 534–561 (TDQE…SSLK) and 623–662 (ETEE…SLSR). Residues 536 to 550 (QEIRSSPPEERELDV) are compositionally biased toward basic and acidic residues. Residues S645, S659, and S757 each carry the phosphoserine modification. A Phosphothreonine modification is found at T819. S924 carries the post-translational modification Phosphoserine. A Nuclear localization signal motif is present at residues 1262 to 1269 (LKRYKRRL). The disordered stretch occupies residues 1269-1294 (LSNKPVGMNQDGPGSRKNVTAYGSLG). S1283 carries the post-translational modification Phosphoserine.

The protein belongs to the NRAMP (TC 2.A.55) family. As to quaternary structure, interacts (via NLS) with ETR1. Interacts (via C-terminus) with EER5 and the COP9 signalosome subunits CSN3, CSN6A and CSN6B. Interacts with ETP1 and ETP2. Interacts with CTR1. Interacts with all members of the ethylene receptor family, including ETR1, ETR2, ERS1, ERS2 and EIN4. Binds to MRF3/ECIP1. Interacts with several P-body components, such as XRN4/EIN5, PAB2, PAB4 and PAB8. Binds to ENAP1 in the presence of ethylene; this reaction facilitates its association with histone. In terms of processing, phosphorylated by CTR1 on at least 4 sites. Phosphorylation of Ser-645 and Ser-924 is involved in repressing EIN2 signaling. Loss of phosphorylation results in nuclear localization of the C-terminus of EIN2. Localized to the guard cells after methyl jasmonate treatment.

It localises to the endoplasmic reticulum membrane. The protein localises to the nucleus. Its subcellular location is the cytoplasm. Central factor in signaling pathways regulated by ethylene (ET) and involved in various processes including development, plant defense, senescence, nucleotide sugar flux, and tropisms. Necessary for ethylene-mediated gene regulation, and for the induction of some genes by ozone. Acts downstream of ET receptors, and upstream of ethylene regulated transcription factors. Required for cytokinin-mediated processes. Seems to be implicated in cross-talk between ET, jasmonate and other pathways. Probably not involved in iron uptake. Has a short half-life and undergoes rapid proteasome-mediated turnover in the absence of ethylene. Required for ethylene-induced EIN3 stabilization via proteasomal degradation of EBF1/EBF2 proteins. Regulates the leaf senescence induced by methyl jasmonate, ethylene and abscisic acid. Required during salt stress to confer resistance. In terms of biological role, trafficking signal inducing ethylene response. The nuclear localization is both necessary and sufficient to activate EIN3-mediated transcription and ethylene responses. Involved in ethylene (ET)-mediated signaling pathways by triggering histone acetylation of H3K14 and H3K23 in an ENAP1-dependent manner, thus influencing the expression of ethylene-responsive genes. Necessary and sufficient for 3'-UTR-mediated translational repression of EBF1 and EBF2 mRNAs. Ethylene induces EIN2-CEND to associate with 3' UTRs in cytoplasmic foci and target EBF1/2 mRNAs to cytoplasmic processing-body (P-body). MPK6 regulates the cleavage and nuclear translocation of EIN2-CEND under methyl jasmonate treatment. Required for EIN3 accumulation. The sequence is that of Ethylene-insensitive protein 2 from Arabidopsis thaliana (Mouse-ear cress).